A 155-amino-acid chain; its full sequence is Deoxyuridine 5'-triphosphate nucleotidohydrolase (155 aa).

Substrate is bound by residues 74–76 (RSG), Asn-87, and 91–93 (LID).

This sequence belongs to the dUTPase family. Requires Mg(2+) as cofactor.

The enzyme catalyses dUTP + H2O = dUMP + diphosphate + H(+). Its pathway is pyrimidine metabolism; dUMP biosynthesis; dUMP from dCTP (dUTP route): step 2/2. Functionally, this enzyme is involved in nucleotide metabolism: it produces dUMP, the immediate precursor of thymidine nucleotides and it decreases the intracellular concentration of dUTP so that uracil cannot be incorporated into DNA. In Xanthomonas axonopodis pv. citri (strain 306), this protein is Deoxyuridine 5'-triphosphate nucleotidohydrolase.